The primary structure comprises 200 residues: Imidazoleglycerol-phosphate dehydratase (200 aa).

Belongs to the imidazoleglycerol-phosphate dehydratase family.

The protein localises to the cytoplasm. The catalysed reaction is D-erythro-1-(imidazol-4-yl)glycerol 3-phosphate = 3-(imidazol-4-yl)-2-oxopropyl phosphate + H2O. It functions in the pathway amino-acid biosynthesis; L-histidine biosynthesis; L-histidine from 5-phospho-alpha-D-ribose 1-diphosphate: step 6/9. In Chlorobium phaeobacteroides (strain DSM 266 / SMG 266 / 2430), this protein is Imidazoleglycerol-phosphate dehydratase.